The sequence spans 294 residues: Nucleotide-binding protein Reut_A0350 (294 aa).

8-15 (GISGSGKS) serves as a coordination point for ATP. 57 to 60 (DIRS) contributes to the GTP binding site.

It belongs to the RapZ-like family.

Its function is as follows. Displays ATPase and GTPase activities. The polypeptide is Nucleotide-binding protein Reut_A0350 (Cupriavidus pinatubonensis (strain JMP 134 / LMG 1197) (Cupriavidus necator (strain JMP 134))).